A 335-amino-acid chain; its full sequence is Glutamyl-tRNA reductase (335 aa).

Residues 60 to 63 (TCHR), S110, 115 to 117 (ETE), and Q121 contribute to the substrate site. The active-site Nucleophile is C61. An NADP(+)-binding site is contributed by 189–194 (GYSEIN).

The protein belongs to the glutamyl-tRNA reductase family. In terms of assembly, homodimer.

The enzyme catalyses (S)-4-amino-5-oxopentanoate + tRNA(Glu) + NADP(+) = L-glutamyl-tRNA(Glu) + NADPH + H(+). It participates in porphyrin-containing compound metabolism; protoporphyrin-IX biosynthesis; 5-aminolevulinate from L-glutamyl-tRNA(Glu): step 1/2. Functionally, catalyzes the NADPH-dependent reduction of glutamyl-tRNA(Glu) to glutamate 1-semialdehyde (GSA). This chain is Glutamyl-tRNA reductase, found in Chlamydia trachomatis serovar L2 (strain ATCC VR-902B / DSM 19102 / 434/Bu).